An 897-amino-acid polypeptide reads, in one-letter code: F-BAR domain only protein 1 (897 aa).

Residues 1 to 276 are mediates membrane-binding; the sequence is MIHFFHTLQG…VGFEEYLSSL (276 aa). One can recognise an F-BAR domain in the interval 2–248; it reads IHFFHTLQGE…NVENIGIENL (247 aa). Positions 134–154 form a coiled coil; the sequence is LQKTREGYHSKCVELERLRKE. A disordered region spans residues 475–537; sequence VEDSGLDSPS…PNPAPSSQSN (63 aa). Over residues 501–520 the composition is skewed to polar residues; that stretch reads PSSQSQSKDSINAASQSRGG. One can recognise an MHD domain in the interval 630–894; it reads SWPVAAAITE…RFATGKYMAG (265 aa).

This sequence belongs to the FCHO family. May oligomerize and form homotetramer. Interacts with acvr1l/alk8; linking this receptor to clathrin-mediated endocytosis.

The protein resides in the membrane. Its subcellular location is the clathrin-coated pit. May function in an early step of clathrin-mediated endocytosis. May regulate Bmp signaling by regulating clathrin-mediated endocytosis of Bmp receptors. The polypeptide is F-BAR domain only protein 1 (fcho1) (Danio rerio (Zebrafish)).